A 588-amino-acid polypeptide reads, in one-letter code: Aspartate--tRNA ligase (588 aa).

Glu-172 contributes to the L-aspartate binding site. The aspartate stretch occupies residues 196–199 (QLFK). Arg-218 contributes to the L-aspartate binding site. ATP contacts are provided by residues 218-220 (RDE) and Gln-227. His-449 is an L-aspartate binding site. Glu-483 is a binding site for ATP. Position 490 (Arg-490) interacts with L-aspartate. Position 535 to 538 (535 to 538 (GLDR)) interacts with ATP.

Belongs to the class-II aminoacyl-tRNA synthetase family. Type 1 subfamily. In terms of assembly, homodimer.

Its subcellular location is the cytoplasm. The enzyme catalyses tRNA(Asp) + L-aspartate + ATP = L-aspartyl-tRNA(Asp) + AMP + diphosphate. Its function is as follows. Catalyzes the attachment of L-aspartate to tRNA(Asp) in a two-step reaction: L-aspartate is first activated by ATP to form Asp-AMP and then transferred to the acceptor end of tRNA(Asp). The polypeptide is Aspartate--tRNA ligase (Histophilus somni (strain 2336) (Haemophilus somnus)).